The chain runs to 702 residues: Protein crooked neck (702 aa).

HAT repeat units lie at residues 56–88 (DYQQ…WEEQ), 90–122 (QEIQ…MEMK), 124–156 (KQVN…MEEM), 158–189 (ENVA…FELR), 191–222 (KEID…FEES), 224–259 (GFIH…FEEG), 261–295 (KEHD…HEKK), 305–337 (VIVS…LIEA), 339–373 (GDRD…LWIN), 383–419 (EDAE…FEIR), 454–486 (REFE…LENL), 488–522 (GDTD…FEVA), and 524–555 (GETE…FEMG). The Nuclear localization signal signature appears at 620–628 (PRRIKKRQK). The segment at 670 to 702 (KDNTVDDPPATAIASEPEPAADAAPADTTDSGD) is disordered. Low complexity predominate over residues 683 to 702 (ASEPEPAADAAPADTTDSGD).

It belongs to the crooked-neck family. In terms of assembly, colocalizes with a complex containing snRNP proteins. In terms of tissue distribution, transcribed in all cells during embryonic development.

The protein localises to the nucleus speckle. In terms of biological role, may be involved in pre-mRNA splicing process. Involved in embryonic neurogenesis and cell rearrangement during Malpighian tubule morphogenesis. The protein is Protein crooked neck (crn) of Drosophila melanogaster (Fruit fly).